The following is a 674-amino-acid chain: Endopolyphosphatase (674 aa).

At 1-21 the chain is on the cytoplasmic side; it reads MVVVGKSEVRNVSMSRPKKKS. 2 propeptides (removed in mature form) span residues 1–83 and 385–674; these read MVVV…VIIK and EQST…YKDD. K6 is covalently cross-linked (Glycyl lysine isopeptide (Lys-Gly) (interchain with G-Cter in ubiquitin)). A helical; Signal-anchor for type II membrane protein membrane pass occupies residues 22 to 42; sequence LIAILSTCVLFFLVFIIGAKF. Residues 43-674 lie on the Vacuolar side of the membrane; the sequence is QYVSVFSKFL…SFASSGYKDD (632 aa). N58 is a glycosylation site (N-linked (GlcNAc...) asparagine). The interval 384–403 is disordered; it reads MEQSTRVQQGEDSNEEDEET. N-linked (GlcNAc...) asparagine glycans are attached at residues N505 and N511.

It belongs to the endopolyphosphatase PPN1 family. As to quaternary structure, homotetramer. Interacts with PPN2. The cofactor is Mn(2+). Requires Mg(2+) as cofactor. Co(2+) serves as cofactor. Zn(2+) is required as a cofactor. Processing by proteases in the vacuole is required for activation. In terms of processing, ubiquitinated. Ubiquitination mediates sorting into internal vesicles in late endosomes. TUL1 and RSP5 are required for ubiquitination. Other cytoplasmic Lys residues than Lys-6 may also be ubiquitinated. Post-translationally, N-glycosylated. N-glycosylation is essential for the protease-mediated maturation.

Its subcellular location is the vacuole membrane. It localises to the cytoplasm. It catalyses the reaction [phosphate](n+1) + n H2O = (n+1) phosphate + n H(+). It carries out the reaction [phosphate](n) + H2O = [phosphate](n-1) + phosphate + H(+). The enzyme catalyses dATP + H2O = dADP + phosphate + H(+). Its activity is regulated as follows. Inhibited by heparin and EDTA. In terms of biological role, catalyzes the hydrolysis of inorganic polyphosphate (polyP) chains of many hundreds of phosphate residues into shorter lengths. Has both exopolyphosphatase and endopolyphosphatase activities at different ratios depending on divalent cations by cleaving phosphate from the chain end and by fragmenting long-chain polymers into shorter ones, respectively. The limited digestion products are 1 and 3 P(i) residues. Also releases phosphate from dATP. dATP phosphohydrolase activity is about 7-fold lower than the exopolyphosphatase activity. The sequence is that of Endopolyphosphatase from Saccharomyces cerevisiae (strain ATCC 204508 / S288c) (Baker's yeast).